A 557-amino-acid chain; its full sequence is Hdr-like menaquinol oxidoreductase iron-sulfur subunit (557 aa).

2 consecutive 4Fe-4S ferredoxin-type domains span residues 86-115 (RAFK…GDPK) and 155-184 (KEWY…AEVV). [4Fe-4S] cluster is bound by residues Cys-95, Cys-98, Cys-101, Cys-105, Cys-164, Cys-167, Cys-170, and Cys-174.

Requires [4Fe-4S] cluster as cofactor.

It localises to the membrane. Has menaquinol-oxidizing activity. The HmeC and HmeD subunits may together mediate electron transfer from menaquinol to an unidentified electron acceptor on the cytoplasmic side of the membrane. The chain is Hdr-like menaquinol oxidoreductase iron-sulfur subunit (hmeD) from Archaeoglobus profundus (strain DSM 5631 / JCM 9629 / NBRC 100127 / Av18).